The following is an 84-amino-acid chain: uncharacterized protein (84 aa).

Residues 10-32 (AFSLAYYIIIHLLCLSYIYEIIH) form a helical membrane-spanning segment.

It localises to the membrane. This is an uncharacterized protein from Saccharomyces cerevisiae (strain ATCC 204508 / S288c) (Baker's yeast).